A 214-amino-acid polypeptide reads, in one-letter code: Ribosomal RNA small subunit methyltransferase G (214 aa).

S-adenosyl-L-methionine contacts are provided by residues Gly77, Leu82, 128 to 129, and Arg143; that span reads VE.

It belongs to the methyltransferase superfamily. RNA methyltransferase RsmG family.

The protein resides in the cytoplasm. It carries out the reaction guanosine(527) in 16S rRNA + S-adenosyl-L-methionine = N(7)-methylguanosine(527) in 16S rRNA + S-adenosyl-L-homocysteine. Functionally, specifically methylates the N7 position of guanine in position 527 of 16S rRNA. In Nitrosomonas eutropha (strain DSM 101675 / C91 / Nm57), this protein is Ribosomal RNA small subunit methyltransferase G.